Consider the following 351-residue polypeptide: Phosphate acyltransferase (351 aa).

It belongs to the PlsX family. In terms of assembly, homodimer. Probably interacts with PlsY.

Its subcellular location is the cytoplasm. The catalysed reaction is a fatty acyl-[ACP] + phosphate = an acyl phosphate + holo-[ACP]. The protein operates within lipid metabolism; phospholipid metabolism. Functionally, catalyzes the reversible formation of acyl-phosphate (acyl-PO(4)) from acyl-[acyl-carrier-protein] (acyl-ACP). This enzyme utilizes acyl-ACP as fatty acyl donor, but not acyl-CoA. In Maricaulis maris (strain MCS10) (Caulobacter maris), this protein is Phosphate acyltransferase.